The chain runs to 546 residues: Sulfite oxidase, mitochondrial (546 aa).

A mitochondrion-targeting transit peptide spans 1–80 (MLLQLYRSVV…YHEHRCRASQ (80 aa)). The Cytochrome b5 heme-binding domain maps to 83 to 162 (PRMYSKEDVR…LAEYKIGELN (80 aa)). A heme b-binding site is contributed by His119. Ser124 is subject to Phosphoserine. Residues His144, Gln146, and His148 each coordinate heme b. Residues 166-175 (SMSPSVEASD) form a hinge region. The interval 176–402 (PYADDPIRHP…YSHWQRRDYK (227 aa)) is moco domain. Residues 216–220 (FTRNH), Cys265, Asp323, His362, Arg367, and 378–380 (HVK) each bind Mo-molybdopterin. The tract at residues 403–539 (GFSPSVDWDT…RGVLSNAWHR (137 aa)) is homodimerization.

In terms of assembly, homodimer. Requires heme b as cofactor. Mo-molybdopterin is required as a cofactor.

The protein resides in the mitochondrion intermembrane space. It catalyses the reaction sulfite + O2 + H2O = sulfate + H2O2. Its pathway is energy metabolism; sulfur metabolism. Its function is as follows. Catalyzes the oxidation of sulfite to sulfate, the terminal reaction in the oxidative degradation of sulfur-containing amino acids. In Mus musculus (Mouse), this protein is Sulfite oxidase, mitochondrial (Suox).